Reading from the N-terminus, the 331-residue chain is Putative T-box protein 36 (331 aa).

Positions 29–210 (EITKKQWNQL…MNRFSRKRKY (182 aa)) form a DNA-binding region, T-box.

The protein resides in the nucleus. The protein is Putative T-box protein 36 (tbx-36) of Caenorhabditis elegans.